Here is a 66-residue protein sequence, read N- to C-terminus: Probable Sec-independent protein translocase protein TatE (66 aa).

Residues Met-1 to Gly-21 form a helical membrane-spanning segment. The segment at Glu-46–Glu-66 is disordered.

Belongs to the TatA/E family. TatE subfamily.

The protein resides in the cell inner membrane. Part of the twin-arginine translocation (Tat) system that transports large folded proteins containing a characteristic twin-arginine motif in their signal peptide across membranes. TatE shares overlapping functions with TatA. This is Probable Sec-independent protein translocase protein TatE from Edwardsiella piscicida.